Consider the following 659-residue polypeptide: DNA ligase (659 aa).

NAD(+) contacts are provided by residues 32–36 (DFEYD), 81–82 (SL), and Glu-111. The N6-AMP-lysine intermediate role is filled by Lys-113. Residues Arg-134, Glu-168, Lys-280, and Lys-304 each coordinate NAD(+). Zn(2+) contacts are provided by Cys-398, Cys-401, Cys-416, and Cys-421. A BRCT domain is found at 585–655 (ETNSIYFQKR…KELNIPIINE (71 aa)).

The protein belongs to the NAD-dependent DNA ligase family. LigA subfamily. It depends on Mg(2+) as a cofactor. The cofactor is Mn(2+).

The catalysed reaction is NAD(+) + (deoxyribonucleotide)n-3'-hydroxyl + 5'-phospho-(deoxyribonucleotide)m = (deoxyribonucleotide)n+m + AMP + beta-nicotinamide D-nucleotide.. In terms of biological role, DNA ligase that catalyzes the formation of phosphodiester linkages between 5'-phosphoryl and 3'-hydroxyl groups in double-stranded DNA using NAD as a coenzyme and as the energy source for the reaction. It is essential for DNA replication and repair of damaged DNA. The chain is DNA ligase from Mycoplasma genitalium (strain ATCC 33530 / DSM 19775 / NCTC 10195 / G37) (Mycoplasmoides genitalium).